An 847-amino-acid chain; its full sequence is Leucine--tRNA ligase (847 aa).

Residues 41–51 (PYPSGRIHMGH) carry the 'HIGH' region motif. Positions 619 to 623 (KMSKS) match the 'KMSKS' region motif. Lysine 622 lines the ATP pocket.

This sequence belongs to the class-I aminoacyl-tRNA synthetase family.

The protein localises to the cytoplasm. It catalyses the reaction tRNA(Leu) + L-leucine + ATP = L-leucyl-tRNA(Leu) + AMP + diphosphate. The sequence is that of Leucine--tRNA ligase from Cereibacter sphaeroides (strain ATCC 17029 / ATH 2.4.9) (Rhodobacter sphaeroides).